The following is an 835-amino-acid chain: Microcephalin (835 aa).

The BRCT 1 domain occupies 1–93; the sequence is MAAPILKDVV…AHIDESLFPA (93 aa). A disordered region spans residues 184-206; the sequence is KEKRENLSPTSSQLIQQSHDNPS. The segment covering 190–206 has biased composition (polar residues); the sequence is LSPTSSQLIQQSHDNPS. 4 positions are modified to phosphoserine: Ser279, Ser287, Ser296, and Ser333. Residue Thr335 is modified to Phosphothreonine. Basic residues predominate over residues 346 to 361; that stretch reads HSRPRSSSVKRKRVSH. Disordered regions lie at residues 346–376 and 418–442; these read HSRPRSSSVKRKRVSHGSHSPPKEKCKRKRS and PDNLKERNSENLPPESQLPSSPAQF. At Ser548 the chain carries Phosphoserine. The segment at 557–582 is disordered; that stretch reads GLKSTQNRGTTSKISNSSEGEAQSEH. Over residues 559-577 the composition is skewed to polar residues; that stretch reads KSTQNRGTTSKISNSSEGE. 2 consecutive BRCT domains span residues 640–730 and 751–833; these read SGRG…PFEL and YRGT…NYLL.

As to quaternary structure, interacts with CDC27 and maybe other components of the APC/C complex. Interacts with histone variant H2AX under DNA damage conditions.

It is found in the cytoplasm. The protein resides in the cytoskeleton. Its subcellular location is the microtubule organizing center. The protein localises to the centrosome. Functionally, implicated in chromosome condensation and DNA damage induced cellular responses. May play a role in neurogenesis and regulation of the size of the cerebral cortex. The sequence is that of Microcephalin from Gorilla gorilla gorilla (Western lowland gorilla).